The sequence spans 127 residues: Flagellar assembly factor FliW (127 aa).

This sequence belongs to the FliW family. In terms of assembly, interacts with translational regulator CsrA and flagellin(s).

It localises to the cytoplasm. Functionally, acts as an anti-CsrA protein, binds CsrA and prevents it from repressing translation of its target genes, one of which is flagellin. Binds to flagellin and participates in the assembly of the flagellum. The chain is Flagellar assembly factor FliW from Campylobacter concisus (strain 13826).